We begin with the raw amino-acid sequence, 94 residues long: Small ribosomal subunit protein bS16c (94 aa).

This sequence belongs to the bacterial ribosomal protein bS16 family.

The protein resides in the plastid. The protein localises to the chloroplast. This is Small ribosomal subunit protein bS16c from Phalaenopsis aphrodite subsp. formosana (Moth orchid).